The following is a 164-amino-acid chain: Putative ankyrin repeat protein RBE_0585 (164 aa).

2 ANK repeats span residues 42-107 (NQDT…VAIL) and 126-149 (DKDTPLIEAARAALPQSISFMLDY).

This Rickettsia bellii (strain RML369-C) protein is Putative ankyrin repeat protein RBE_0585.